The sequence spans 265 residues: Type 1 encapsulin shell protein (265 aa).

This sequence belongs to the encapsulin family. Family 1 subfamily. Found in a complex with DyP, suggesting it is the native cargo protein. Monomers form pentamers, which assemble to form hollow shells composed of 60 subunits with several openings.

The protein localises to the encapsulin nanocompartment. It is found in the cell membrane. Its function is as follows. Shell component of a type 1 encapsulin nanocompartment. Assembles into proteinaceous shells 23-24 nm in diameter with 2-2.5 nm thick walls. Cargo protein DyP is targeted to the interior via its C-terminal extension; probably only 1 DyP hexamer is incorporated into each shell. Probably involved in protection against oxidative damage. This is Type 1 encapsulin shell protein from Mycolicibacterium paratuberculosis (strain ATCC BAA-968 / K-10) (Mycobacterium paratuberculosis).